The primary structure comprises 227 residues: Phosphoribosylformylglycinamidine synthase subunit PurQ (227 aa).

A Glutamine amidotransferase type-1 domain is found at 3–227; sequence SSVITFPGSN…FFQNLINNLK (225 aa). Cys85 (nucleophile) is an active-site residue. Active-site residues include His201 and Glu203.

In terms of assembly, part of the FGAM synthase complex composed of 1 PurL, 1 PurQ and 2 PurS subunits.

The protein localises to the cytoplasm. It carries out the reaction N(2)-formyl-N(1)-(5-phospho-beta-D-ribosyl)glycinamide + L-glutamine + ATP + H2O = 2-formamido-N(1)-(5-O-phospho-beta-D-ribosyl)acetamidine + L-glutamate + ADP + phosphate + H(+). It catalyses the reaction L-glutamine + H2O = L-glutamate + NH4(+). Its pathway is purine metabolism; IMP biosynthesis via de novo pathway; 5-amino-1-(5-phospho-D-ribosyl)imidazole from N(2)-formyl-N(1)-(5-phospho-D-ribosyl)glycinamide: step 1/2. In terms of biological role, part of the phosphoribosylformylglycinamidine synthase complex involved in the purines biosynthetic pathway. Catalyzes the ATP-dependent conversion of formylglycinamide ribonucleotide (FGAR) and glutamine to yield formylglycinamidine ribonucleotide (FGAM) and glutamate. The FGAM synthase complex is composed of three subunits. PurQ produces an ammonia molecule by converting glutamine to glutamate. PurL transfers the ammonia molecule to FGAR to form FGAM in an ATP-dependent manner. PurS interacts with PurQ and PurL and is thought to assist in the transfer of the ammonia molecule from PurQ to PurL. The protein is Phosphoribosylformylglycinamidine synthase subunit PurQ of Pelagibacter ubique (strain HTCC1062).